A 202-amino-acid polypeptide reads, in one-letter code: Superoxide dismutase [Fe] (202 aa).

Fe cation contacts are provided by histidine 30, histidine 78, aspartate 164, and histidine 168.

Belongs to the iron/manganese superoxide dismutase family. Homotetramer. It depends on Fe cation as a cofactor.

The enzyme catalyses 2 superoxide + 2 H(+) = H2O2 + O2. Destroys superoxide anion radicals which are normally produced within the cells and which are toxic to biological systems. This chain is Superoxide dismutase [Fe] (sod), found in Methanothermobacter marburgensis (strain ATCC BAA-927 / DSM 2133 / JCM 14651 / NBRC 100331 / OCM 82 / Marburg) (Methanobacterium thermoautotrophicum).